A 739-amino-acid chain; its full sequence is MICOS complex subunit Mic60 (739 aa).

The disordered stretch occupies residues 23-63 (ANNRQFGGSSSGSGGREQGRRQQEEQGQQGDQGYQGYQSLP). The span at 47-61 (EQGQQGDQGYQGYQS) shows a compositional bias: low complexity. Residues 69–89 (AGFGKVVLFVSPLAAVGGVIT) traverse the membrane as a helical segment. The segment at 154–219 (VTGLFGGGSG…PAAKPKDNPL (66 aa)) is disordered. The segment covering 163–198 (GDDKSKKSKVEPVKATPAEEKRPSKPSEVSKTEAKP) has biased composition (basic and acidic residues). The segment covering 199–212 (VSKPAAAAAPAPAA) has biased composition (low complexity). The stretch at 283–339 (TAVATAERAAREAQEKIVACEIALSAAATAQNAKKVEAVRDKIKKLVDHIGNVKDEL) forms a coiled coil.

This sequence belongs to the MICOS complex subunit Mic60 family. As to quaternary structure, component of the mitochondrial contact site and cristae organizing system (MICOS) complex. Interacts with the mitochondria-shaping protein Opa1.

The protein resides in the mitochondrion inner membrane. Functionally, component of the MICOS complex, a large protein complex of the mitochondrial inner membrane that plays crucial roles in the maintenance of crista junctions, inner membrane architecture, and formation of contact sites to the outer membrane. The chain is MICOS complex subunit Mic60 from Drosophila melanogaster (Fruit fly).